We begin with the raw amino-acid sequence, 338 residues long: Nuclear hormone receptor family member nhr-108 (338 aa).

The segment at residues 7–82 (NQPCMVCGEI…IGMLEKVVAS (76 aa)) is a DNA-binding region (nuclear receptor). An NR C4-type zinc finger spans residues 10 to 30 (CMVCGEISYSIRFGAVSCRAC). The NR C4-type; degenerate zinc finger occupies 46–65 (KRCNGACDLGKYHRKTCQSC). Positions 92-338 (NNQTILSGLE…QCPLYEATNE (247 aa)) constitute an NR LBD domain.

The protein belongs to the nuclear hormone receptor family.

Its subcellular location is the nucleus. Orphan nuclear receptor. The protein is Nuclear hormone receptor family member nhr-108 (nhr-108) of Caenorhabditis elegans.